The primary structure comprises 436 residues: Glutamyl-tRNA reductase (436 aa).

Residues 56–59 (TCNR), Ser-114, 119–121 (EAQ), and Gln-125 contribute to the substrate site. Catalysis depends on Cys-57, which acts as the Nucleophile. NADP(+) is bound at residue 194 to 199 (GAGEMI).

This sequence belongs to the glutamyl-tRNA reductase family. In terms of assembly, homodimer.

The catalysed reaction is (S)-4-amino-5-oxopentanoate + tRNA(Glu) + NADP(+) = L-glutamyl-tRNA(Glu) + NADPH + H(+). It participates in porphyrin-containing compound metabolism; protoporphyrin-IX biosynthesis; 5-aminolevulinate from L-glutamyl-tRNA(Glu): step 1/2. Its function is as follows. Catalyzes the NADPH-dependent reduction of glutamyl-tRNA(Glu) to glutamate 1-semialdehyde (GSA). The protein is Glutamyl-tRNA reductase of Acidovorax sp. (strain JS42).